The primary structure comprises 213 residues: Leucine-rich repeat protein 1 (213 aa).

An N-terminal signal peptide occupies residues 1–21 (MGAGALGVVAMVAAAVVVAMA). LRR repeat units lie at residues 90-113 (DHLQYLELYKNNIQGTIPSELGNL), 115-137 (NLISLDLYKNNISGTIPPTLGKL), 138-161 (TSLVFLRLNGNRLTGPIPRELAGI), and 163-186 (SLKVVDVSSNDLCGTIPTSGPFEH).

In terms of assembly, interacts with HIR1.

The protein localises to the early endosome membrane. Its subcellular location is the late endosome membrane. The protein resides in the cell membrane. In terms of biological role, involved in plant defense response. The polypeptide is Leucine-rich repeat protein 1 (Oryza sativa subsp. indica (Rice)).